The chain runs to 422 residues: UPF0229 protein SO_2883 (422 aa).

Residues 60–111 (SEPMFHQGKGGVRDRVHPGNDQFTRGDKIDRPQGGSGGGAGKGDASDSGEGN) form a disordered region. Residues 70 to 90 (GVRDRVHPGNDQFTRGDKIDR) show a composition bias toward basic and acidic residues.

It belongs to the UPF0229 family.

This is UPF0229 protein SO_2883 from Shewanella oneidensis (strain ATCC 700550 / JCM 31522 / CIP 106686 / LMG 19005 / NCIMB 14063 / MR-1).